A 151-amino-acid chain; its full sequence is Sigma factor binding protein 1, chloroplastic (151 aa).

Low complexity predominate over residues 1–13 (MESSSSTFLTTTS). Disordered stretches follow at residues 1-41 (MESS…KPIK) and 66-93 (TGQD…PPAE). Residues 1-54 (MESSSSTFLTTTSLDKKKPSPVSRKSPKQKKKTTSTNKPIKVRYISNPMRVQTC) constitute a chloroplast transit peptide. The Bipartite nuclear localization signal signature appears at 16 to 32 (KKKPSPVSRKSPKQKKK). Positions 58 to 67 (FRELVQELTG) match the VQ motif.

Interacts with the sigma factor SIGA in chloroplast. Interacts with WRKY25 and WRKY33 in the nucleus. Expressed in leaves and roots, but not in flowers.

It is found in the plastid. Its subcellular location is the chloroplast. It localises to the nucleus. Its function is as follows. Contributes to plant defense. May regulate chloroplast metabolism upon infection with pathogens such as Pseudomonas syringae. Functions as activator of WRKY33 in plant defense against necrotrophic pathogens by stimulating the DNA-binding activity of WRKY33. This is Sigma factor binding protein 1, chloroplastic (SIB1) from Arabidopsis thaliana (Mouse-ear cress).